We begin with the raw amino-acid sequence, 575 residues long: Isocitrate dehydrogenase kinase/phosphatase (575 aa).

Residues 315–321 (APGVKGM) and K336 each bind ATP. Residue D371 is part of the active site.

This sequence belongs to the AceK family.

The protein localises to the cytoplasm. It catalyses the reaction L-seryl-[isocitrate dehydrogenase] + ATP = O-phospho-L-seryl-[isocitrate dehydrogenase] + ADP + H(+). Its function is as follows. Bifunctional enzyme which can phosphorylate or dephosphorylate isocitrate dehydrogenase (IDH) on a specific serine residue. This is a regulatory mechanism which enables bacteria to bypass the Krebs cycle via the glyoxylate shunt in response to the source of carbon. When bacteria are grown on glucose, IDH is fully active and unphosphorylated, but when grown on acetate or ethanol, the activity of IDH declines drastically concomitant with its phosphorylation. The protein is Isocitrate dehydrogenase kinase/phosphatase of Yersinia enterocolitica serotype O:8 / biotype 1B (strain NCTC 13174 / 8081).